Reading from the N-terminus, the 68-residue chain is DNA-directed RNA polymerase subunit omega (68 aa).

It belongs to the RNA polymerase subunit omega family. The RNAP catalytic core consists of 2 alpha, 1 beta, 1 beta' and 1 omega subunit. When a sigma factor is associated with the core the holoenzyme is formed, which can initiate transcription.

The enzyme catalyses RNA(n) + a ribonucleoside 5'-triphosphate = RNA(n+1) + diphosphate. Promotes RNA polymerase assembly. Latches the N- and C-terminal regions of the beta' subunit thereby facilitating its interaction with the beta and alpha subunits. This chain is DNA-directed RNA polymerase subunit omega, found in Desulfatibacillum aliphaticivorans.